The sequence spans 308 residues: Glutaminase (308 aa).

Substrate-binding residues include S66, N117, E161, N168, Y192, Y244, and V262.

Belongs to the glutaminase family. As to quaternary structure, homotetramer.

It catalyses the reaction L-glutamine + H2O = L-glutamate + NH4(+). This is Glutaminase from Klebsiella pneumoniae subsp. pneumoniae (strain ATCC 700721 / MGH 78578).